The following is a 412-amino-acid chain: MCLTAAPSRVSPVAAAAAAAADVAGSSESTVNLMADVDKKDPQYKQIFLERFRKKLQSDKTGMNDLESFVELPEGVAPSAASIGPIKRGSEPLPPWLKLKVPKGMTHRPRFNRIRRSMREKNLSTVCEEAKCPNIGECWGGSDDEGTATATIMVMGSHCTRGCRFCSVLTSRRPPPLDPEEPEKVAAAVHEMGVDYIVMTMVDRDDLPDGGASHVCRCIHTIKEKNPALMLEALVGDFHGDLKLVEQLAVTPLSVYAHNIECVERITPRVRDRRASYKQSLQTLEHVTKSTNGKMLTKSSIMLGLGEEEKEVRQTLRDLRTAGVSAVTLGQYLQPSRTRLKVSRYAHPKEFEMWEKEAMDMGFLYCASGPMVRSSYRAGEYYIKSILKQRQSAEGGKATAAATAANAGAAIA.

7 residues coordinate [4Fe-4S] cluster: C127, C132, C138, C159, C163, C166, and S375. Residues 142–364 form the Radical SAM core domain; the sequence is SDDEGTATAT…EKEAMDMGFL (223 aa).

This sequence belongs to the radical SAM superfamily. Lipoyl synthase family. Requires [4Fe-4S] cluster as cofactor.

It is found in the mitochondrion. It catalyses the reaction [[Fe-S] cluster scaffold protein carrying a second [4Fe-4S](2+) cluster] + N(6)-octanoyl-L-lysyl-[protein] + 2 oxidized [2Fe-2S]-[ferredoxin] + 2 S-adenosyl-L-methionine + 4 H(+) = [[Fe-S] cluster scaffold protein] + N(6)-[(R)-dihydrolipoyl]-L-lysyl-[protein] + 4 Fe(3+) + 2 hydrogen sulfide + 2 5'-deoxyadenosine + 2 L-methionine + 2 reduced [2Fe-2S]-[ferredoxin]. The protein operates within protein modification; protein lipoylation via endogenous pathway; protein N(6)-(lipoyl)lysine from octanoyl-[acyl-carrier-protein]: step 2/2. In terms of biological role, catalyzes the radical-mediated insertion of two sulfur atoms into the C-6 and C-8 positions of the octanoyl moiety bound to the lipoyl domains of lipoate-dependent enzymes, thereby converting the octanoylated domains into lipoylated derivatives. This Leishmania infantum protein is Lipoyl synthase, mitochondrial.